A 181-amino-acid chain; its full sequence is Secreted chorismate mutase (181 aa).

Positions 1-20 (MLASVALAALAGVGTPHATA) are cleaved as a signal peptide. Residues 21–100 (DDASPLVPLV…ATSSVEHTRF (80 aa)) form the Chorismate mutase domain. Residues R36, K47, D56, 59-63 (REQQV), 92-96 (TSSVE), and R121 each bind substrate. Cysteines 147 and 180 form a disulfide.

In terms of assembly, homodimer.

It is found in the secreted. It catalyses the reaction chorismate = prephenate. It functions in the pathway metabolic intermediate biosynthesis; prephenate biosynthesis; prephenate from chorismate: step 1/1. In terms of biological role, catalyzes the Claisen rearrangement of chorismate to prephenate. May play some role in the pathogenicity. This chain is Secreted chorismate mutase, found in Mycolicibacterium smegmatis (strain ATCC 700084 / mc(2)155) (Mycobacterium smegmatis).